Consider the following 348-residue polypeptide: Putative agmatine deiminase (348 aa).

C335 functions as the Amidino-cysteine intermediate in the catalytic mechanism.

The protein belongs to the agmatine deiminase family.

The enzyme catalyses agmatine + H2O = N-carbamoylputrescine + NH4(+). The protein is Putative agmatine deiminase of Legionella pneumophila subsp. pneumophila (strain Philadelphia 1 / ATCC 33152 / DSM 7513).